The chain runs to 94 residues: Citrate lyase acyl carrier protein (94 aa).

An O-(phosphoribosyl dephospho-coenzyme A)serine modification is found at serine 14.

Belongs to the CitD family. In terms of assembly, oligomer with a subunit composition of (alpha,beta,gamma)6.

It localises to the cytoplasm. In terms of biological role, covalent carrier of the coenzyme of citrate lyase. This Fusobacterium nucleatum subsp. nucleatum (strain ATCC 25586 / DSM 15643 / BCRC 10681 / CIP 101130 / JCM 8532 / KCTC 2640 / LMG 13131 / VPI 4355) protein is Citrate lyase acyl carrier protein.